Reading from the N-terminus, the 732-residue chain is MSSLTNQDAINSIDIDVGGTFTDFVLTLDGERHIAKCPTTPHDLSIGFLNAVEAGGDKVGLSVEELLPRIDIIRYSTTVALNRLLQRQGPRIGLLTTEGHEDAILIGRGAQWTDGQRVAERRNIAVQNKPLPLIERDLILGVRERIDSSGSVVRPLDEEDVRTKLRMLMDRGARAIVVSLLWSFMNPAHEKRVREIIREEYKEYHIGFVPVVMSHSVVSKIGEYERTMTAVLDAYLQRSMQNDIGATWDKLRAKGYHGAFLMIHNSGGSADIFKTPASRTFNGGPVAGLMGSAYFANKLGYKNVVAGDVGGTSFDVALVVESSVRNYTFRPVIDKWMVNVTMMQTISVGSGGGSIAKVDRSGTRLEVGPRSAGSMPGPVCYDLGGTEPTVTDADVVLGYINPDTYYGGRMPLNKAKAEKAIREKIAQPLGIETIEAAALIRYIVDENMASAIKREVHMRGYHPEDFVLFAFGGAGPTHMAGLKGDIPKAVVFPAAPVFCAMGSSIMDIVHMYEQSRRMVFMEPGTEKFVVDYEHFNQTVDTMIERARQELRSEGLEVDDASFGLELDMLYGGQVNLKRMSSPLLHIRTAEDALKVYQAFETEFSEAFSPLVVNKPGGVFLDNFVLRVTVPTWKPPIPEYPLQGTDPSAAFLGKRKAYWPETKHWADTPTYQFELLQAGNVIDGPAIVEAELTTIVVPPRQRLSIDTHGLAILEAIDPAPPTKRVSAAAAAIV.

This sequence belongs to the HyuA family. As to quaternary structure, acetophenone carboxylase consists of five subunits; a heterooctameric subcomplex of two alpha (Apc1), two beta (Apc2), two gamma (Apc3) and two delta (Apc4) subunits assembles with the epsilon (Apc5) subunit in an unknown stoichiometry. Mg(2+) is required as a cofactor. The cofactor is Mn(2+).

The protein resides in the cytoplasm. It catalyses the reaction acetophenone + hydrogencarbonate + 2 ATP + H2O = 3-oxo-3-phenylpropanoate + 2 ADP + 2 phosphate + 2 H(+). Inhibited by zinc ions, carbamoylphosphate and beta,gamma-imido-ATP. Catalyzes the carboxylation of acetophenone to form 3-oxo-3-phenylpropanoate (benzoylacetate) in the anaerobic catabolism of ethylbenzene. Also carboxylates propiophenone at the same rate and 4-acetyl-pyridine at lower rates. The sequence is that of Acetophenone carboxylase gamma subunit (apc3) from Aromatoleum aromaticum (strain DSM 19018 / LMG 30748 / EbN1) (Azoarcus sp. (strain EbN1)).